Here is a 436-residue protein sequence, read N- to C-terminus: 3-ketoacyl-CoA thiolase (436 aa).

Cys-99 functions as the Acyl-thioester intermediate in the catalytic mechanism. Catalysis depends on proton acceptor residues His-392 and Cys-422.

The protein belongs to the thiolase-like superfamily. Thiolase family. Heterotetramer of two alpha chains (FadJ) and two beta chains (FadI).

Its subcellular location is the cytoplasm. It carries out the reaction an acyl-CoA + acetyl-CoA = a 3-oxoacyl-CoA + CoA. The protein operates within lipid metabolism; fatty acid beta-oxidation. Its function is as follows. Catalyzes the final step of fatty acid oxidation in which acetyl-CoA is released and the CoA ester of a fatty acid two carbons shorter is formed. The sequence is that of 3-ketoacyl-CoA thiolase from Shigella flexneri.